A 329-amino-acid polypeptide reads, in one-letter code: Holliday junction branch migration complex subunit RuvB (329 aa).

Residues 1 to 20 (MSRILEGDPVEGEKSWENEL) form a disordered region. The interval 1-181 (MSRILEGDPV…FGIVERLQFY (181 aa)) is large ATPase domain (RuvB-L). A compositionally biased stretch (basic and acidic residues) spans 11 to 20 (EGEKSWENEL). Residues L20, R21, G62, K65, T66, T67, 128–130 (EDY), R171, Y181, and R218 contribute to the ATP site. T66 contacts Mg(2+). The segment at 182-252 (DKDALRQILM…IAVYALNQLG (71 aa)) is small ATPAse domain (RuvB-S). Residues 255-329 (QYGLDLMDRR…FAKSSVLADK (75 aa)) form a head domain (RuvB-H) region. DNA is bound by residues R291, K310, and R315.

Belongs to the RuvB family. As to quaternary structure, homohexamer. Forms an RuvA(8)-RuvB(12)-Holliday junction (HJ) complex. HJ DNA is sandwiched between 2 RuvA tetramers; dsDNA enters through RuvA and exits via RuvB. An RuvB hexamer assembles on each DNA strand where it exits the tetramer. Each RuvB hexamer is contacted by two RuvA subunits (via domain III) on 2 adjacent RuvB subunits; this complex drives branch migration. In the full resolvosome a probable DNA-RuvA(4)-RuvB(12)-RuvC(2) complex forms which resolves the HJ.

It is found in the cytoplasm. It catalyses the reaction ATP + H2O = ADP + phosphate + H(+). Its function is as follows. The RuvA-RuvB-RuvC complex processes Holliday junction (HJ) DNA during genetic recombination and DNA repair, while the RuvA-RuvB complex plays an important role in the rescue of blocked DNA replication forks via replication fork reversal (RFR). RuvA specifically binds to HJ cruciform DNA, conferring on it an open structure. The RuvB hexamer acts as an ATP-dependent pump, pulling dsDNA into and through the RuvAB complex. RuvB forms 2 homohexamers on either side of HJ DNA bound by 1 or 2 RuvA tetramers; 4 subunits per hexamer contact DNA at a time. Coordinated motions by a converter formed by DNA-disengaged RuvB subunits stimulates ATP hydrolysis and nucleotide exchange. Immobilization of the converter enables RuvB to convert the ATP-contained energy into a lever motion, pulling 2 nucleotides of DNA out of the RuvA tetramer per ATP hydrolyzed, thus driving DNA branch migration. The RuvB motors rotate together with the DNA substrate, which together with the progressing nucleotide cycle form the mechanistic basis for DNA recombination by continuous HJ branch migration. Branch migration allows RuvC to scan DNA until it finds its consensus sequence, where it cleaves and resolves cruciform DNA. This is Holliday junction branch migration complex subunit RuvB from Bdellovibrio bacteriovorus (strain ATCC 15356 / DSM 50701 / NCIMB 9529 / HD100).